Consider the following 216-residue polypeptide: Thiopurine S-methyltransferase (216 aa).

S-adenosyl-L-methionine is bound by residues W11, L46, E67, and R122.

This sequence belongs to the class I-like SAM-binding methyltransferase superfamily. TPMT family.

It is found in the cytoplasm. It carries out the reaction S-adenosyl-L-methionine + a thiopurine = S-adenosyl-L-homocysteine + a thiopurine S-methylether.. The chain is Thiopurine S-methyltransferase from Vibrio parahaemolyticus serotype O3:K6 (strain RIMD 2210633).